The following is a 908-amino-acid chain: Flap endonuclease GEN homolog 1 (908 aa).

The tract at residues 2–96 is XPG-N domain; that stretch reads GVNDLWQILE…SKRTQTRYGP (95 aa). Residues D30, E75, E134, E136, D155, D157, and D208 each coordinate Mg(2+). The tract at residues 122-208 is XPG-I domain; that stretch reads ECLGMPWVQA…VGLAVLLGCD (87 aa). Residues 208 to 383 form a 5'-3' exonuclease domain region; it reads DYLPKGVPGV…LLVLLTRYDM (176 aa). The tract at residues 389 to 463 is chromodomain; sequence GRKTSNQLQP…VYQKQLSETK (75 aa). Disordered regions lie at residues 460 to 482, 629 to 650, 792 to 834, and 853 to 886; these read SETK…LPEA, YESE…QSNP, RDSS…NKLR, and AEDE…SWEN. Positions 465–476 are enriched in basic residues; the sequence is RKQKSMKNKPKG. S794 and S795 each carry phosphoserine. The segment covering 824-834 has biased composition (basic and acidic residues); the sequence is HVRDSTHNKLR.

It belongs to the XPG/RAD2 endonuclease family. GEN subfamily. As to quaternary structure, largely monomeric, dimerizes on the Holliday junction and the first nick occurs upon dimerization at the junction. Requires Mg(2+) as cofactor. Expressed in bone marrow and testis and to a lesser extent in thymus, spleen, brain and colon.

The protein resides in the nucleus. Its function is as follows. Endonuclease which resolves Holliday junctions (HJs) by the introduction of symmetrically related cuts across the junction point, to produce nicked duplex products in which the nicks can be readily ligated. Four-way DNA intermediates, also known as Holliday junctions, are formed during homologous recombination and DNA repair, and their resolution is necessary for proper chromosome segregation. Cleaves HJs by a nick and counter-nick mechanism involving dual coordinated incisions that lead to the formation of ligatable nicked duplex products. Cleavage of the first strand is rate limiting, while second strand cleavage is rapid. Largely monomeric, dimerizes on the HJ and the first nick occurs upon dimerization at the junction. Efficiently cleaves both single and double HJs contained within large recombination intermediates. Exhibits a weak sequence preference for incision between two G residues that reside in a T-rich region of DNA. Also has endonuclease activity on 5'-flap and replication fork (RF) DNA substrates. This chain is Flap endonuclease GEN homolog 1 (Gen1), found in Mus musculus (Mouse).